We begin with the raw amino-acid sequence, 394 residues long: Homoserine O-succinyltransferase (394 aa).

One can recognise an AB hydrolase-1 domain in the interval 54-368 (NAVLICHALS…SSPAGHDAFL (315 aa)). S160 functions as the Nucleophile in the catalytic mechanism. R236 is a substrate binding site. Active-site residues include D331 and H364. D365 serves as a coordination point for substrate.

This sequence belongs to the AB hydrolase superfamily. MetX family. As to quaternary structure, homodimer.

The protein localises to the cytoplasm. The catalysed reaction is L-homoserine + succinyl-CoA = O-succinyl-L-homoserine + CoA. Its pathway is amino-acid biosynthesis; L-methionine biosynthesis via de novo pathway; O-succinyl-L-homoserine from L-homoserine: step 1/1. In terms of biological role, transfers a succinyl group from succinyl-CoA to L-homoserine, forming succinyl-L-homoserine. The sequence is that of Homoserine O-succinyltransferase from Magnetococcus marinus (strain ATCC BAA-1437 / JCM 17883 / MC-1).